We begin with the raw amino-acid sequence, 146 residues long: Hemoglobin subunit beta (146 aa).

A Globin domain is found at 2-146 (HWTETERATI…VVAALSREYH (145 aa)). Residues His-63 and His-92 each contribute to the heme b site.

This sequence belongs to the globin family. As to quaternary structure, heterotetramer of two alpha chains and two beta chains (an easy dimerization is also reported). Red blood cells.

In terms of biological role, involved in oxygen transport from the lung to the various peripheral tissues. The protein is Hemoglobin subunit beta (HBB) of Latimeria chalumnae (Coelacanth).